The chain runs to 91 residues: Hepcidin-1 (91 aa).

The first 24 residues, 1–24, serve as a signal peptide directing secretion; it reads MKLSNVFLAAVVILTCVCVFQITA. Residues 25 to 64 constitute a propeptide that is removed on maturation; the sequence is VPFIQQVQDEHHVESEELQENQHLTEAEHRQTDPLVLFRT. 4 cysteine pairs are disulfide-bonded: cysteine 73–cysteine 89, cysteine 76–cysteine 79, cysteine 77–cysteine 85, and cysteine 80–cysteine 88.

Belongs to the hepcidin family.

The protein localises to the secreted. Its function is as follows. Seems to act as a signaling molecule involved in the maintenance of iron homeostasis. Seems to be required in conjunction with HFE to regulate both intestinal iron absorption and iron storage in macrophages. May also have antimicrobial activity. The protein is Hepcidin-1 (hamp1) of Danio rerio (Zebrafish).